A 144-amino-acid chain; its full sequence is Large ribosomal subunit protein uL15 (144 aa).

Positions 1–54 are disordered; that stretch reads MRLNTLSPAEGSKKAGKRLGRGIGSGLGKTGGRGHKGQKSRSGGGVRRGFEGGQ. Residues 21–31 are compositionally biased toward gly residues; sequence RGIGSGLGKTG.

The protein belongs to the universal ribosomal protein uL15 family. In terms of assembly, part of the 50S ribosomal subunit.

Its function is as follows. Binds to the 23S rRNA. The chain is Large ribosomal subunit protein uL15 from Salmonella arizonae (strain ATCC BAA-731 / CDC346-86 / RSK2980).